Here is a 651-residue protein sequence, read N- to C-terminus: MAAGVATWLPFARAAAVGWLPLAQQPLPPAPEVKASRGDEVLVVNVSGRRFETWKNTLDRYPDTLLGSSEKEFFYDAESGEYFFDRDPDMFRHVLNFYRTGRLHCPRQECIQAFDEELAFYGLVPELVGDCCLEEYRDRKKENAERLAEDEEAEQAGEGPALPAGSSLRQRLWRAFENPHTSTAALVFYYVTGFFIAVSVIANVVETIPCRGTPRWPSKEQSCGDRFPTAFFCMDTACVLIFTGEYLLRLFAAPSRCRFLRSVMSLIDVVAILPYYIGLFVPKNDDVSGAFVTLRVFRVFRIFKFSRHSQGLRILGYTLKSCASELGFLLFSLTMAIIIFATVMFYAEKGTSKTNFTSIPAAFWYTIVTMTTLGYGDMVPSTIAGKIFGSICSLSGVLVIALPVPVIVSNFSRIYHQNQRADKRRAQQKVRLARIRLAKSGTTNAFLQYKQNGGLEDSGSGDGQMLCVRSRSAFEQQHHHLLHCLEKTTCHEFTDELTFSEALGAVSLGGRTSRSTSVSSQPMGPGSLFSSCCSRRVNRRAIRLANSTASVSRGSMQELDTLAGLRRSPAPQTRSSLNAKPHDSLDLNCDSRDFVAAIISIPTPPANTPDESQPSSPSGGGGSGGTPNTTLRNSSLGTPCLLPETVKISSL.

Residues Met1–Thr183 lie on the Cytoplasmic side of the membrane. An interaction with KCNIP1, KCNIP2, and other family members region spans residues Ala2 to Leu20. The Zn(2+) site is built by His104, Cys131, and Cys132. Positions Ala144 to Ala164 are disordered. The helical transmembrane segment at Ala184–Val205 threads the bilayer. At Glu206–Ala230 the chain is on the extracellular side. Residues Phe231 to Ala252 form a helical membrane-spanning segment. Residues Ala253–Val263 lie on the Cytoplasmic side of the membrane. A helical transmembrane segment spans residues Met264–Asn284. The Extracellular portion of the chain corresponds to Asp285 to Val287. The helical; Voltage-sensor transmembrane segment at Ser288–His308 threads the bilayer. Topologically, residues Ser309–Ala323 are cytoplasmic. The tract at residues Gln310–Ala323 is S4-S5 linker. Residues Ser324 to Phe345 form a helical membrane-spanning segment. The Extracellular segment spans residues Tyr346 to Ile359. Asn355 is a glycosylation site (N-linked (GlcNAc...) asparagine). Residues Pro360–Thr371 constitute an intramembrane region (helical). The Selectivity filter motif lies at Thr372 to Asp377. The stretch at Thr372–Val379 is an intramembrane region. Over Pro380–Lys386 the chain is Extracellular. Residues Ile387–Tyr415 traverse the membrane as a helical segment. Topologically, residues His416 to Leu651 are cytoplasmic. At Ser458 the chain carries Phosphoserine. Residues Phe474 to Thr489 are required for dendritic targeting. Phosphoserine is present on Ser555. Disordered stretches follow at residues Arg566 to Leu585 and Ile601 to Leu651. The span at Thr626–Gly637 shows a compositional bias: polar residues.

Belongs to the potassium channel family. D (Shal) (TC 1.A.1.2) subfamily. Kv4.1/KCND1 sub-subfamily. Component of heteromultimeric potassium channels. Identified in potassium channel complexes containing KCND1, KCND2, KCND3, KCNIP1, KCNIP2, KCNIP3, KCNIP4, DPP6 and DPP10.

The protein localises to the cell membrane. It catalyses the reaction K(+)(in) = K(+)(out). In terms of biological role, A-type voltage-gated potassium channel that mediates transmembrane potassium transport in excitable membranes in the brain. Mediates A-type current I(SA) in suprachiasmatic nucleus (SCN) neurons. Exhibits a low-threshold A-type current with a hyperpolarized steady-state inactivation midpoint and the recovery process was steeply voltage-dependent, with recovery being markedly faster at more negative potentials. May regulates repetitive firing rates in the suprachiasmatic nucleus (SCN) neurons and circadian rhythms in neuronal excitability and behavior. Contributes to the regulation of the circadian rhythm of action potential firing in suprachiasmatic nucleus neurons, which regulates the circadian rhythm of locomotor activity. The regulatory subunit KCNIP1 modulates the kinetics of channel inactivation, increases the current amplitudes and accelerates recovery from inactivation, shifts activation in a depolarizing direction. The regulatory subunit DPP10 decreases the voltage sensitivity of the inactivation channel gating. The chain is A-type voltage-gated potassium channel KCND1 from Mus musculus (Mouse).